The chain runs to 673 residues: Forkhead box protein O3 (673 aa).

The tract at residues 1-153 (MAEAPASPAP…SGQPRKCSSR (153 aa)) is disordered. Ser-30 is subject to Phosphoserine; by AMPK. Thr-32 is modified (phosphothreonine; by PKB/AKT1). Lys-46 bears the N6-methyllysine mark. Acidic residues predominate over residues 57–68 (IPEEEDDEDDED). A compositionally biased stretch (gly residues) spans 79–89 (IGGGGGSGTLG). The segment at 80-108 (GGGGGSGTLGSGLLLEDSARVLAPGGQDP) is required for mitochondrial import. Lys-149 bears the N6-methyllysine mark. Positions 157-251 (WGNLSYADLI…KSGKAPRRRA (95 aa)) form a DNA-binding region, fork-head. Thr-179 is subject to Phosphothreonine; by AMPK. Phosphoserine; by STK4/MST1 is present on Ser-209. Ser-215 bears the Phosphoserine; by MAPKAPK5 mark. Residue Lys-230 is modified to N6-methyllysine. The disordered stretch occupies residues 231–302 (SSWWIINPDG…GSPTSRSSDE (72 aa)). An N6-acetyllysine modification is found at Lys-242. The Nuclear localization signal motif lies at 242–259 (KSGKAPRRRAVSMDNSNK). Ser-253 carries the phosphoserine; by PKB/AKT1 and MAPKAPK5 modification. Residues 261–272 (TKSRGRAAKKKA) show a composition bias toward basic residues. N6-methyllysine is present on residues Lys-262 and Lys-271. Phosphoserine is present on residues Ser-280 and Ser-284. Residues 283 to 298 (DSPSQLSKWPGSPTSR) show a composition bias toward polar residues. At Lys-290 the chain carries N6-methyllysine. Ser-294 is modified (phosphoserine). At Ser-299 the chain carries Phosphoserine; by CaMK2A. A mediates interaction with CHUK/IKKA and IKBKB/IKKB region spans residues 300–673 (SDELDAWTDF…QASSQSWVPG (374 aa)). Ser-311 is subject to Phosphoserine. At Ser-315 the chain carries Phosphoserine; by SGK1. A phosphoserine; by AMPK mark is found at Ser-399 and Ser-413. An N6-methyllysine modification is found at Lys-419. Position 421 is a phosphoserine (Ser-421). The interval 536 to 587 (HQHQTQGALGGSRALSNSVSNMGLSESSSLGSAKHQQQSPVSQSMQTLSDSL) is disordered. Polar residues predominate over residues 549–582 (ALSNSVSNMGLSESSSLGSAKHQQQSPVSQSMQT). A Phosphoserine; by MAPKAPK5 modification is found at Ser-551. At Ser-555 the chain carries Phosphoserine; by AMPK and MAPKAPK5. Ser-588 and Ser-626 each carry phosphoserine; by AMPK. A Phosphoserine; by IKKB modification is found at Ser-644.

In terms of assembly, upon metabolic stress, forms a complex composed of FOXO3, SIRT3 and mitochondrial RNA polymerase POLRMT; the complex is recruited to mtDNA in a SIRT3-dependent manner. Also forms a complex composed of FOXO3, SIRT3, TFAM and POLRMT. Interacts with SIRT2; the interaction occurs independently of SIRT2 deacetylase activity. Interacts with YWHAB/14-3-3-beta and YWHAZ/14-3-3-zeta, which are required for cytosolic sequestration. Upon oxidative stress, interacts with STK4/MST1, which disrupts interaction with YWHAB/14-3-3-beta and leads to nuclear translocation. Interacts with PIM1. Interacts with DDIT3/CHOP. Interacts (deacetylated form) with SKP2. Interacts with CHUK and IKBKB. Interacts with CAMK2A, CAMK2B and calcineurin A. Interacts with NUPR1; this interaction represses FOXO3 transactivation. Post-translationally, in the presence of survival factors such as IGF1, phosphorylated on Thr-32 and Ser-253 by AKT1/PKB. This phosphorylated form then interacts with 14-3-3 proteins and is retained in the cytoplasm. Survival factor withdrawal induces dephosphorylation and promotes translocation to the nucleus where the dephosphorylated protein induces transcription of target genes and triggers apoptosis. Although AKT1/PKB doesn't appear to phosphorylate Ser-315 directly, it may activate other kinases that trigger phosphorylation at this residue. Phosphorylated by STK4/MST1 on Ser-209 upon oxidative stress, which leads to dissociation from YWHAB/14-3-3-beta and nuclear translocation. Phosphorylated by PIM1. Phosphorylation by AMPK leads to the activation of transcriptional activity without affecting subcellular localization. In response to metabolic stress, phosphorylated by AMPK on Ser-30 which mediates FOXO3 mitochondrial translocation. Phosphorylation by MAPKAPK5 promotes nuclear localization and DNA-binding, leading to induction of miR-34b and miR-34c expression, 2 post-transcriptional regulators of MYC that bind to the 3'UTR of MYC transcript and prevent its translation. Phosphorylated by CHUK/IKKA and IKBKB/IKKB. TNF-induced inactivation of FOXO3 requires its phosphorylation at Ser-644 by IKBKB/IKKB which promotes FOXO3 retention in the cytoplasm, polyubiquitination and ubiquitin-mediated proteasomal degradation. May be dephosphorylated by calcineurin A on Ser-299 which abolishes FOXO3 transcriptional activity. In cancer cells, ERK mediated-phosphorylation of Ser-12 is required for mitochondrial translocation of FOXO3 in response to metabolic stress or chemotherapeutic agents. Phosphorylation at Ser-253 promotes its degradation by the proteasome. Dephosphorylation at Ser-253 by protein phosphatase 2A (PPP2CA) promotes its stabilization; interaction with PPP2CA is enhanced by AMBRA1. In terms of processing, deacetylation by SIRT1 or SIRT2 stimulates interaction of FOXO3 with SKP2 and facilitates SCF(SKP2)-mediated FOXO3 ubiquitination and proteasomal degradation. Deacetylation by SIRT2 stimulates FOXO3-mediated transcriptional activity in response to oxidative stress. Deacetylated by SIRT3. Deacetylation by SIRT3 stimulates FOXO3-mediated mtDNA transcriptional activity in response to metabolic stress. Heavily methylated by SET9 which decreases stability, while moderately increasing transcriptional activity. The main methylation site is Lys-271. Methylation doesn't affect subcellular location. Post-translationally, polyubiquitinated. Ubiquitinated by a SCF complex containing SKP2, leading to proteasomal degradation. In terms of processing, the N-terminus is cleaved following import into the mitochondrion. As to expression, ubiquitous.

The protein resides in the cytoplasm. It is found in the cytosol. Its subcellular location is the nucleus. It localises to the mitochondrion matrix. The protein localises to the mitochondrion outer membrane. Functionally, transcriptional activator that recognizes and binds to the DNA sequence 5'-[AG]TAAA[TC]A-3' and regulates different processes, such as apoptosis and autophagy. Acts as a positive regulator of autophagy in skeletal muscle: in starved cells, enters the nucleus following dephosphorylation and binds the promoters of autophagy genes, such as GABARAP1L, MAP1LC3B and ATG12, thereby activating their expression, resulting in proteolysis of skeletal muscle proteins. Triggers apoptosis in the absence of survival factors, including neuronal cell death upon oxidative stress. Participates in post-transcriptional regulation of MYC: following phosphorylation by MAPKAPK5, promotes induction of miR-34b and miR-34c expression, 2 post-transcriptional regulators of MYC that bind to the 3'UTR of MYC transcript and prevent its translation. In response to metabolic stress, translocates into the mitochondria where it promotes mtDNA transcription. In response to metabolic stress, translocates into the mitochondria where it promotes mtDNA transcription. Also acts as a key regulator of chondrogenic commitment of skeletal progenitor cells in response to lipid availability: when lipids levels are low, translocates to the nucleus and promotes expression of SOX9, which induces chondrogenic commitment and suppresses fatty acid oxidation. Also acts as a key regulator of regulatory T-cells (Treg) differentiation by activating expression of FOXP3. The protein is Forkhead box protein O3 of Homo sapiens (Human).